A 400-amino-acid chain; its full sequence is NADH-quinone oxidoreductase subunit D (400 aa).

Belongs to the complex I 49 kDa subunit family. As to quaternary structure, NDH-1 is composed of 14 different subunits. Subunits NuoB, C, D, E, F, and G constitute the peripheral sector of the complex.

Its subcellular location is the cell inner membrane. It catalyses the reaction a quinone + NADH + 5 H(+)(in) = a quinol + NAD(+) + 4 H(+)(out). NDH-1 shuttles electrons from NADH, via FMN and iron-sulfur (Fe-S) centers, to quinones in the respiratory chain. The immediate electron acceptor for the enzyme in this species is believed to be ubiquinone. Couples the redox reaction to proton translocation (for every two electrons transferred, four hydrogen ions are translocated across the cytoplasmic membrane), and thus conserves the redox energy in a proton gradient. The polypeptide is NADH-quinone oxidoreductase subunit D (Granulibacter bethesdensis (strain ATCC BAA-1260 / CGDNIH1)).